The sequence spans 261 residues: uncharacterized protein (261 aa).

The protein belongs to the FwdC/FmdC family.

This is an uncharacterized protein from Methanocaldococcus jannaschii (strain ATCC 43067 / DSM 2661 / JAL-1 / JCM 10045 / NBRC 100440) (Methanococcus jannaschii).